Consider the following 954-residue polypeptide: Glycine dehydrogenase (decarboxylating) (954 aa).

Lys704 is subject to N6-(pyridoxal phosphate)lysine.

It belongs to the GcvP family. The glycine cleavage system is composed of four proteins: P, T, L and H. It depends on pyridoxal 5'-phosphate as a cofactor.

It catalyses the reaction N(6)-[(R)-lipoyl]-L-lysyl-[glycine-cleavage complex H protein] + glycine + H(+) = N(6)-[(R)-S(8)-aminomethyldihydrolipoyl]-L-lysyl-[glycine-cleavage complex H protein] + CO2. The glycine cleavage system catalyzes the degradation of glycine. The P protein binds the alpha-amino group of glycine through its pyridoxal phosphate cofactor; CO(2) is released and the remaining methylamine moiety is then transferred to the lipoamide cofactor of the H protein. The chain is Glycine dehydrogenase (decarboxylating) from Vibrio vulnificus (strain YJ016).